The primary structure comprises 159 residues: MSDDEHHFEASESGASKTYPQSAGNIRKGGHIVIKNRPCKVVEVSTSKTGKHGHAKCHFVAIDIFTAKKLEDIVPSSHNCDVPHVNRVDYQLIDITEDGFVSLLTDSGGTKDDLKLPTDDGLTAQMRLGFDEGKDIVVSVMSSMGEEQICAVKEVGGGK.

Residues 1–10 (MSDDEHHFEA) are compositionally biased toward basic and acidic residues. Residues 1–25 (MSDDEHHFEASESGASKTYPQSAGN) are disordered. The residue at position 2 (S2) is a Phosphoserine. The segment covering 13–24 (SGASKTYPQSAG) has biased composition (polar residues). K51 carries the hypusine modification.

Belongs to the eIF-5A family. As to quaternary structure, homodimer. Interacts with AHK4 and AHP1. Cytokinin regulates the formation of the AHP1-AHK4-ELF5A-2 complex. In terms of processing, lys-51 undergoes hypusination, a unique post-translational modification that consists in the addition of a butylamino group from spermidine to lysine side chain, leading to the formation of the unusual amino acid hypusine. eIF-5As are the only known proteins to undergo this modification, which is essential for their function. As to expression, ubiquitous. In roots, expressed mostly inside the stele of the mature zone.

It is found in the cytoplasm. It localises to the nucleus. Its function is as follows. Translation factor that promotes translation elongation and termination, particularly upon ribosome stalling at specific amino acid sequence contexts. Binds between the exit (E) and peptidyl (P) site of the ribosome and promotes rescue of stalled ribosome: specifically required for efficient translation of polyproline-containing peptides as well as other motifs that stall the ribosome. Acts as a ribosome quality control (RQC) cofactor by joining the RQC complex to facilitate peptidyl transfer during CAT tailing step. Regulates cytokinin-mediated root protoxylem specification and represses secifically the expression of AHP6. Regulates the induction of programmed cell death caused by infection with virulent pathogen. The chain is Eukaryotic translation initiation factor 5A-2 (ELF5A-2) from Arabidopsis thaliana (Mouse-ear cress).